A 382-amino-acid chain; its full sequence is Protein RecA (382 aa).

Residue 79-86 (GPESSGKT) coordinates ATP.

This sequence belongs to the RecA family.

The protein localises to the cytoplasm. Can catalyze the hydrolysis of ATP in the presence of single-stranded DNA, the ATP-dependent uptake of single-stranded DNA by duplex DNA, and the ATP-dependent hybridization of homologous single-stranded DNAs. It interacts with LexA causing its activation and leading to its autocatalytic cleavage. In Streptococcus sanguinis (strain SK36), this protein is Protein RecA.